The chain runs to 350 residues: Membrane progestin receptor alpha (350 aa).

The Cytoplasmic portion of the chain corresponds to 1–80; sequence MATMVAQKLS…HNEAVNVWTH (80 aa). The chain crosses the membrane as a helical span at residues 81 to 101; it reads LLAALVLLLRLAIFVGTVDFW. The Extracellular segment spans residues 102–105; it reads GDPH. A helical membrane pass occupies residues 106–126; it reads ALPLFIIVLASFTYLSLSALA. Residues 127-139 are Cytoplasmic-facing; it reads HLLQAKSEFWHYS. A helical membrane pass occupies residues 140 to 160; it reads FFFLDYVGVAVYQFGSALAHF. At 161 to 165 the chain is on the extracellular side; that stretch reads YYAIE. A helical transmembrane segment spans residues 166-186; sequence PAWHAQVQTIFLPMAAFLAWL. The Cytoplasmic segment spans residues 187-239; sequence SCTGSCYNKYIQKPGLLGRTCQEVPSALAYALDISPVAHRILASPEPATDDPA. Residues 240–260 traverse the membrane as a helical segment; the sequence is LLYHKCQVVFFLLAAAFFSAF. Residues 261–278 lie on the Extracellular side of the membrane; that stretch reads MPERWFPGSCHIFGQGHQ. Residues 279–299 traverse the membrane as a helical segment; sequence LFHVFLVLCTLAQLEAVALDY. The Cytoplasmic portion of the chain corresponds to 300 to 318; sequence EARRPIYEPLHTRWPHNFS. A helical transmembrane segment spans residues 319 to 339; that stretch reads GLFLLTVGSSILTAFLLSQLV. Over 340 to 350 the chain is Extracellular; sequence RRKLDLDRKTQ.

The protein belongs to the ADIPOR family.

It is found in the cell membrane. In terms of biological role, plasma membrane progesterone (P4) receptor coupled to G proteins. Seems to act through a G(i) mediated pathway. May be involved in oocyte maturation. Involved in neurosteroid inhibition of apoptosis. Also binds dehydroepiandrosterone (DHEA), pregnanolone, pregnenolone and allopregnanolone. This Sus scrofa (Pig) protein is Membrane progestin receptor alpha (PAQR7).